Reading from the N-terminus, the 71-residue chain is Large ribosomal subunit protein bL28 (71 aa).

Belongs to the bacterial ribosomal protein bL28 family.

The sequence is that of Large ribosomal subunit protein bL28 from Rubrobacter xylanophilus (strain DSM 9941 / JCM 11954 / NBRC 16129 / PRD-1).